The primary structure comprises 365 residues: Sesquiterpene synthase 3 (365 aa).

Mg(2+) is bound by residues Asp-117, Asn-253, Ser-257, and Glu-261. Positions 117 to 121 (DDWSD) match the DDXXD motif motif. The short motif at 253–261 (NDILSYNRE) is the NSE/DTE motif element. The (2E,6E)-farnesyl diphosphate site is built by Arg-341 and Tyr-342.

This sequence belongs to the terpene synthase family. Mg(2+) serves as cofactor.

It carries out the reaction (2E,6E)-farnesyl diphosphate = delta-cadinene + diphosphate. Its function is as follows. Terpene cyclase that catalyzes the cyclization of farnesyl diphosphate (FPP) to various sesquiterpenes, including beta-elemene gamma-cadinene, delta-cadinene, and alpha-cadinene. In Postia placenta (strain ATCC 44394 / Madison 698-R) (Brown rot fungus), this protein is Sesquiterpene synthase 3.